We begin with the raw amino-acid sequence, 310 residues long: HTH-type transcriptional regulator PunR (310 aa).

The HTH lysR-type domain maps to 2–59; the sequence is WSEYSLEVVDAVARNGSFSAAAQELHRVPSAVSYTVRQLEEWLAVPLFERRHRDVELT. A DNA-binding region (H-T-H motif) is located at residues 19-38; it reads FSAAAQELHRVPSAVSYTVR.

The protein belongs to the LysR transcriptional regulatory family.

The protein resides in the cytoplasm. In terms of biological role, transcriptional regulator that activates the expression of punC, which encodes a purine nucleoside transporter. This chain is HTH-type transcriptional regulator PunR, found in Escherichia coli O157:H7.